Consider the following 517-residue polypeptide: Crotonobetaine/carnitine--CoA ligase (517 aa).

The protein belongs to the ATP-dependent AMP-binding enzyme family.

It catalyses the reaction 4-(trimethylamino)butanoate + ATP + CoA = 4-(trimethylamino)butanoyl-CoA + AMP + diphosphate. The catalysed reaction is crotonobetaine + ATP + CoA = crotonobetainyl-CoA + AMP + diphosphate. It carries out the reaction (R)-carnitine + ATP + CoA = (R)-carnitinyl-CoA + AMP + diphosphate. Its pathway is amine and polyamine metabolism; carnitine metabolism. Its function is as follows. Catalyzes the transfer of CoA to carnitine, generating the initial carnitinyl-CoA needed for the CaiB reaction cycle. Also has activity toward crotonobetaine and gamma-butyrobetaine. The polypeptide is Crotonobetaine/carnitine--CoA ligase (Escherichia fergusonii (strain ATCC 35469 / DSM 13698 / CCUG 18766 / IAM 14443 / JCM 21226 / LMG 7866 / NBRC 102419 / NCTC 12128 / CDC 0568-73)).